Here is a 367-residue protein sequence, read N- to C-terminus: Probable butyrate kinase (367 aa).

Belongs to the acetokinase family.

Its subcellular location is the cytoplasm. It catalyses the reaction butanoate + ATP = butanoyl phosphate + ADP. In Bacillus anthracis (strain A0248), this protein is Probable butyrate kinase.